The sequence spans 658 residues: DNA ligase (658 aa).

NAD(+) is bound by residues 31–35 (DFEYD), 80–81 (SL), and E110. The active-site N6-AMP-lysine intermediate is K112. 4 residues coordinate NAD(+): R133, E167, K279, and K303. Positions 397, 400, 415, and 420 each coordinate Zn(2+). Residues 584–654 (DTASIYFQKS…KALNIPIINE (71 aa)) enclose the BRCT domain.

Belongs to the NAD-dependent DNA ligase family. LigA subfamily. It depends on Mg(2+) as a cofactor. The cofactor is Mn(2+).

The catalysed reaction is NAD(+) + (deoxyribonucleotide)n-3'-hydroxyl + 5'-phospho-(deoxyribonucleotide)m = (deoxyribonucleotide)n+m + AMP + beta-nicotinamide D-nucleotide.. DNA ligase that catalyzes the formation of phosphodiester linkages between 5'-phosphoryl and 3'-hydroxyl groups in double-stranded DNA using NAD as a coenzyme and as the energy source for the reaction. It is essential for DNA replication and repair of damaged DNA. This Mycoplasma pneumoniae (strain ATCC 29342 / M129 / Subtype 1) (Mycoplasmoides pneumoniae) protein is DNA ligase.